A 475-amino-acid chain; its full sequence is Ribulose bisphosphate carboxylase large chain (475 aa).

The propeptide occupies 1–2; the sequence is MS. Position 3 is an N-acetylproline (proline 3). The residue at position 14 (lysine 14) is an N6,N6,N6-trimethyllysine. The substrate site is built by asparagine 123 and threonine 173. The active-site Proton acceptor is the lysine 175. Lysine 177 provides a ligand contact to substrate. Mg(2+) is bound by residues lysine 201, aspartate 203, and glutamate 204. Lysine 201 is subject to N6-carboxylysine. Histidine 294 serves as the catalytic Proton acceptor. Substrate is bound by residues histidine 327 and serine 379.

This sequence belongs to the RuBisCO large chain family. Type I subfamily. Heterohexadecamer of 8 large chains and 8 small chains; disulfide-linked. The disulfide link is formed within the large subunit homodimers. Requires Mg(2+) as cofactor. In terms of processing, the disulfide bond which can form in the large chain dimeric partners within the hexadecamer appears to be associated with oxidative stress and protein turnover.

It is found in the plastid. The protein localises to the chloroplast. The enzyme catalyses 2 (2R)-3-phosphoglycerate + 2 H(+) = D-ribulose 1,5-bisphosphate + CO2 + H2O. It carries out the reaction D-ribulose 1,5-bisphosphate + O2 = 2-phosphoglycolate + (2R)-3-phosphoglycerate + 2 H(+). In terms of biological role, ruBisCO catalyzes two reactions: the carboxylation of D-ribulose 1,5-bisphosphate, the primary event in carbon dioxide fixation, as well as the oxidative fragmentation of the pentose substrate in the photorespiration process. Both reactions occur simultaneously and in competition at the same active site. The chain is Ribulose bisphosphate carboxylase large chain from Amaranthus hypochondriacus (Prince-of-Wales feather).